The sequence spans 330 residues: Lactamase-like protein nscB (330 aa).

Residues His-97, His-99, Asp-101, and His-102 each contribute to the Zn(2+) site. Asp-101 functions as the Proton donor/acceptor in the catalytic mechanism.

Belongs to the metallo-beta-lactamase superfamily. It depends on Zn(2+) as a cofactor.

It functions in the pathway secondary metabolite biosynthesis. In terms of biological role, lactamase-like protein; part of the gene cluster that mediates the biosynthesis of neosartoricin, a prenylated anthracenone that exhibits T-cell antiproliferative activity, suggestive of a physiological role as an immunosuppressive agent. The non-reducing polyketide synthase nscA probably synthesizes and cyclizes the decaketide backbone. The hydrolase nscB then mediates the product release through hydrolysis followed by spontaneous decarboxylation. The prenyltransferase nscD catalyzes the addition of the dimethylallyl group to the aromatic C5. The FAD-dependent monooxygenase nscC is then responsible for the stereospecific hydroxylation at C2. There is no gene encoding O-acetyltransferase in the nsc gene cluster; thus, the last step of 2-O-acetylation leading to neosartoricin may be catalyzed by an unidentified O-acetyltransferase. This Aspergillus fumigatus (strain ATCC MYA-4609 / CBS 101355 / FGSC A1100 / Af293) (Neosartorya fumigata) protein is Lactamase-like protein nscB.